The primary structure comprises 292 residues: 33 kDa chaperonin (292 aa).

Disulfide bonds link Cys-230/Cys-232 and Cys-263/Cys-266.

It belongs to the HSP33 family. Post-translationally, under oxidizing conditions two disulfide bonds are formed involving the reactive cysteines. Under reducing conditions zinc is bound to the reactive cysteines and the protein is inactive.

Its subcellular location is the cytoplasm. In terms of biological role, redox regulated molecular chaperone. Protects both thermally unfolding and oxidatively damaged proteins from irreversible aggregation. Plays an important role in the bacterial defense system toward oxidative stress. The chain is 33 kDa chaperonin from Sodalis glossinidius (strain morsitans).